We begin with the raw amino-acid sequence, 103 residues long: Acylphosphatase-2 (103 aa).

Ser2 bears the N-acetylserine mark. Residues 13 to 103 (SVDYEVFGRV…LDFSGFSTRY (91 aa)) form the Acylphosphatase-like domain. Catalysis depends on residues Arg28 and Asn46.

Belongs to the acylphosphatase family.

It catalyses the reaction an acyl phosphate + H2O = a carboxylate + phosphate + H(+). Functionally, its physiological role is not yet clear. In Gallus gallus (Chicken), this protein is Acylphosphatase-2 (ACYP2).